The sequence spans 736 residues: Poly(A) polymerase gamma (736 aa).

Residue Lys2 is modified to N6-acetyllysine. Ser23 and Ser29 each carry phosphoserine. ATP is bound by residues 99–101, Thr108, 112–114, Asp166, Lys227, Tyr236, and 245–246; these read FGS, DID, and GV. Mg(2+) is bound by residues Asp112, Asp114, and Asp166. The interval 506 to 564 is disordered; the sequence is KQSLSDVNRSSGGLQSKRLSLDSSCLDSSRDTDNGTPFNSPASKSDSPSVGETERNSAE. Residues 509 to 519 show a composition bias toward polar residues; it reads LSDVNRSSGGL. The span at 521–532 shows a compositional bias: low complexity; the sequence is SKRLSLDSSCLD. Residue Ser525 is modified to Phosphoserine. Over residues 539 to 555 the composition is skewed to polar residues; that stretch reads NGTPFNSPASKSDSPSV. Ser599 and Ser648 each carry phosphoserine. Thr654 is subject to Phosphothreonine. Over residues 673 to 685 the composition is skewed to basic and acidic residues; sequence DPRTAEERKRKSV. Positions 673–720 are disordered; that stretch reads DPRTAEERKRKSVDAIGGESMPIPTIDTSRKKRLPSKELPDSSSPVPA. 2 positions are modified to phosphoserine: Ser684 and Ser708.

The protein belongs to the poly(A) polymerase family. Mg(2+) is required as a cofactor. It depends on Mn(2+) as a cofactor. As to expression, expressed predominantly in testis, and weakly in other tissues. Overexpressed in several tumors.

It localises to the nucleus. It catalyses the reaction RNA(n) + ATP = RNA(n)-3'-adenine ribonucleotide + diphosphate. Responsible for the post-transcriptional adenylation of the 3'-terminal of mRNA precursors and several small RNAs including signal recognition particle (SRP) RNA, nuclear 7SK RNA, U2 small nuclear RNA, and ribosomal 5S RNA. The protein is Poly(A) polymerase gamma of Homo sapiens (Human).